The following is a 232-amino-acid chain: Flagellar L-ring protein (232 aa).

The N-terminal stretch at 1 to 21 (MQKNAAHTYAISSLLVLSLTG) is a signal peptide. Cys-22 carries N-palmitoyl cysteine lipidation. The S-diacylglycerol cysteine moiety is linked to residue Cys-22.

Belongs to the FlgH family. As to quaternary structure, the basal body constitutes a major portion of the flagellar organelle and consists of four rings (L,P,S, and M) mounted on a central rod.

The protein resides in the cell outer membrane. Its subcellular location is the bacterial flagellum basal body. Functionally, assembles around the rod to form the L-ring and probably protects the motor/basal body from shearing forces during rotation. The polypeptide is Flagellar L-ring protein (Escherichia coli O7:K1 (strain IAI39 / ExPEC)).